Here is a 138-residue protein sequence, read N- to C-terminus: Small ribosomal subunit protein uS11c (138 aa).

Residues 1–22 are disordered; it reads MTKPIPRIGSRRNGRIGSRKNA. Over residues 9-22 the composition is skewed to basic residues; it reads GSRRNGRIGSRKNA.

It belongs to the universal ribosomal protein uS11 family. In terms of assembly, part of the 30S ribosomal subunit.

The protein localises to the plastid. It localises to the chloroplast. The sequence is that of Small ribosomal subunit protein uS11c from Dioscorea elephantipes (Elephant's foot yam).